Here is a 482-residue protein sequence, read N- to C-terminus: Protein trichome birefringence-like 15 (482 aa).

The helical; Signal-anchor for type II membrane protein transmembrane segment at 109 to 129 (GSVSLSLIILILLVTTLLVSA) threads the bilayer. The short motif at 217–219 (GDS) is the GDS motif element. Residues 461–475 (DCLHWCLPGIPDTWN) carry the DCXHWCLPGXXDXWN motif motif.

The protein belongs to the PC-esterase family. TBL subfamily.

The protein resides in the membrane. Functionally, may act as a bridging protein that binds pectin and other cell wall polysaccharides. Probably involved in maintaining esterification of pectins. May be involved in the specific O-acetylation of cell wall polymers. The polypeptide is Protein trichome birefringence-like 15 (TBL15) (Arabidopsis thaliana (Mouse-ear cress)).